The chain runs to 176 residues: Peptide deformylase (176 aa).

Fe cation-binding residues include cysteine 92 and histidine 134. Residue glutamate 135 is part of the active site. Fe cation is bound at residue histidine 138.

The protein belongs to the polypeptide deformylase family. Fe(2+) serves as cofactor.

The catalysed reaction is N-terminal N-formyl-L-methionyl-[peptide] + H2O = N-terminal L-methionyl-[peptide] + formate. Its function is as follows. Removes the formyl group from the N-terminal Met of newly synthesized proteins. Requires at least a dipeptide for an efficient rate of reaction. N-terminal L-methionine is a prerequisite for activity but the enzyme has broad specificity at other positions. The protein is Peptide deformylase of Acinetobacter baumannii (strain SDF).